Reading from the N-terminus, the 655-residue chain is p-hydroxybenzoic acid efflux pump subunit AaeB (655 aa).

Helical transmembrane passes span 13–33 (FAVKLACAIVLALFVGFHFQL), 38–58 (WAVLTAAIVAAGPAFAAGGEP), 69–89 (LRIIGTFIGCIAALTIIITMI), 93–113 (LLMILVCCIWAGFCTWISSLV), 121–141 (WGLSGYTALIIVITIQAEPLL), 152–172 (EIVIGIVCAIMADLLFSPRSV), 370–390 (LFWLWTGWTSGSGAMVMIAVV), 407–427 (FIYGTLAALPLGLLYFLVIIP), 431–451 (QSMLLLCLSLAVLGFFLGIEV), 459–479 (MGALASTINIIVLDNPMTFHF), and 482–502 (FLDSALGQIVGCMMAFIVILL).

It belongs to the aromatic acid exporter ArAE (TC 2.A.85) family.

The protein localises to the cell inner membrane. Its function is as follows. Forms an efflux pump with AaeA. Could function as a metabolic relief valve, allowing to eliminate certain compounds when they accumulate to high levels in the cell. The protein is p-hydroxybenzoic acid efflux pump subunit AaeB of Citrobacter koseri (strain ATCC BAA-895 / CDC 4225-83 / SGSC4696).